Consider the following 364-residue polypeptide: Poly(3-hydroxyalkanoate) polymerase subunit PhaE (364 aa).

Positions 322-364 (SGKTPTTALKAPAPATKATEKPATRATTRRKTAAKPTGGTADD) are disordered. The segment covering 324 to 338 (KTPTTALKAPAPATK) has biased composition (low complexity).

Belongs to the PHA/PHB synthase family. Type III PhaE subfamily. Forms a heterodimer with PhaC, which may multimerize in the presence of 3-hydroxybutyryl-CoA.

It localises to the cytoplasm. Its pathway is biopolymer metabolism; poly-(R)-3-hydroxybutanoate biosynthesis. Its function is as follows. Polymerizes D(-)-3-hydroxybutyryl-CoA to create polyhydroxybutyrate (PHB) which consists of thousands of hydroxybutyrate molecules linked end to end. This subunit has no catalytic activity but enhances the activity of PhaC, the catalytic subunit. This is Poly(3-hydroxyalkanoate) polymerase subunit PhaE from Thiocystis violacea.